A 173-amino-acid polypeptide reads, in one-letter code: Regulatory protein RecX (173 aa).

The protein belongs to the RecX family.

It localises to the cytoplasm. In terms of biological role, modulates RecA activity. The chain is Regulatory protein RecX from Mycobacterium marinum (strain ATCC BAA-535 / M).